The primary structure comprises 253 residues: tRNA pseudouridine synthase A (253 aa).

Aspartate 53 acts as the Nucleophile in catalysis. Tyrosine 112 is a substrate binding site.

Belongs to the tRNA pseudouridine synthase TruA family. In terms of assembly, homodimer.

The catalysed reaction is uridine(38/39/40) in tRNA = pseudouridine(38/39/40) in tRNA. Its function is as follows. Formation of pseudouridine at positions 38, 39 and 40 in the anticodon stem and loop of transfer RNAs. This Lactococcus lactis subsp. lactis (strain IL1403) (Streptococcus lactis) protein is tRNA pseudouridine synthase A.